A 305-amino-acid polypeptide reads, in one-letter code: Major fimbrium anchoring subunit FimB (305 aa).

Positions 1–22 (MNDAKKYIVSVLILLVAGMFGG) are cleaved as a signal peptide. Residue Cys-23 is the site of N-palmitoyl cysteine attachment. A lipid anchor (S-diacylglycerol cysteine) is attached at Cys-23.

This sequence belongs to the bacteroidetes fimbrillin superfamily. FimB/Mfa2 family. As to quaternary structure, fimB is not part of the fimbrium itself, but anchors the fimbrium in the outer membrane. Linear, head-to-tail oligomerization of fimbrial subunits mediates assembly of the fimbrium stalk, while the minor components FimC, FimD and FimE probably form the fimbrium tip. The anchoring subunit FimB limits fimbrium length and is important for solid fimbrium attachment to the outer membrane. In its absence, the major fimbriae become very long and are easily detached from the membrane.

Its subcellular location is the cell outer membrane. Functionally, anchoring subunit of the major fimbriae. Regulates fimbrial length. These filamentous pili are attached to the cell surface; they mediate biofilm formation, adhesion onto host cells and onto other bacteria that are part of the oral microbiome. Fimbriae of P.gingivalis are major virulence factors. The chain is Major fimbrium anchoring subunit FimB from Porphyromonas gingivalis (Bacteroides gingivalis).